The primary structure comprises 757 residues: RNA-directed RNA polymerase catalytic subunit (757 aa).

The segment at 50-82 (SERGRWTKNTETGAPQLNPIDGPLPEDNEPSGY) is disordered. 2 short sequence motifs (nuclear localization signal) span residues 187–195 (RKRRVRDNV) and 203–216 (RTIG…NKRS). The segment at 249–256 (RGFVYFVE) is promoter-binding site. In terms of domain architecture, RdRp catalytic spans 286-483 (VRKMMTNSQD…GINMSKKKSY (198 aa)).

The protein belongs to the influenza viruses polymerase PB1 family. Influenza RNA polymerase is composed of three subunits: PB1, PB2 and PA. Interacts (via N-terminus) with PA (via C-terminus). Interacts (via C-terminus) with PB2 (via N-terminus); this interaction is essential for transcription initiation. Interacts (via C-terminus) with human PKP2 (via N-terminus); the interaction competitively inhibits the interaction between the RNA polymerase subunits PB1 and PB2. Post-translationally, phosphorylated by host PRKCA.

The protein localises to the host nucleus. It is found in the host cytoplasm. It carries out the reaction RNA(n) + a ribonucleoside 5'-triphosphate = RNA(n+1) + diphosphate. Functionally, RNA-dependent RNA polymerase which is responsible for replication and transcription of virus RNA segments. The transcription of viral mRNAs occurs by a unique mechanism called cap-snatching. 5' methylated caps of cellular mRNAs are cleaved after 10-13 nucleotides by PA. In turn, these short capped RNAs are used as primers by PB1 for transcription of viral mRNAs. During virus replication, PB1 initiates RNA synthesis and copy vRNA into complementary RNA (cRNA) which in turn serves as a template for the production of more vRNAs. The sequence is that of RNA-directed RNA polymerase catalytic subunit from Influenza A virus (strain A/Beijing/11/1956 H1N1).